A 492-amino-acid chain; its full sequence is GTPase-activating protein MSB4 (492 aa).

The region spanning 147–367 is the Rab-GAP TBC domain; it reads GIPAEWRGNA…RIWDCLFYEE (221 aa).

It is found in the cytoplasm. The protein resides in the bud. It localises to the bud neck. Regulates exocytosis by functioning as a GAP for SEC4. Also required for efficient polarization of the actin patches. The chain is GTPase-activating protein MSB4 (MSB4) from Saccharomyces cerevisiae (strain ATCC 204508 / S288c) (Baker's yeast).